The primary structure comprises 99 residues: MSIYVGNLSYSVTQDDLTKVFSEYGSVTRVQLPTDRETGRVRGFGFVEMESSAAEDAAIQALDGAEWMGRVLKVNKARPREEKGARSGGGSWSRNNGGY.

An RRM domain is found at 2 to 79 (SIYVGNLSYS…RVLKVNKARP (78 aa)). A disordered region spans residues 78–99 (RPREEKGARSGGGSWSRNNGGY). The span at 86 to 99 (RSGGGSWSRNNGGY) shows a compositional bias: gly residues.

The chain is Putative RNA-binding protein RbpE (rbpE) from Nostoc sp. (strain PCC 7120 / SAG 25.82 / UTEX 2576).